The primary structure comprises 387 residues: Succinate--CoA ligase [ADP-forming] subunit beta (387 aa).

The 228-residue stretch at 9-236 (KGLFAKHNVP…RAATDPLELK (228 aa)) folds into the ATP-grasp domain. Residues K45, 52 to 54 (GRG), S94, and E99 each bind ATP. Positions 191 and 205 each coordinate Mg(2+). Residues N256 and 318 to 320 (GIT) contribute to the substrate site.

This sequence belongs to the succinate/malate CoA ligase beta subunit family. Heterotetramer of two alpha and two beta subunits. Requires Mg(2+) as cofactor.

It catalyses the reaction succinate + ATP + CoA = succinyl-CoA + ADP + phosphate. The enzyme catalyses GTP + succinate + CoA = succinyl-CoA + GDP + phosphate. The protein operates within carbohydrate metabolism; tricarboxylic acid cycle; succinate from succinyl-CoA (ligase route): step 1/1. Succinyl-CoA synthetase functions in the citric acid cycle (TCA), coupling the hydrolysis of succinyl-CoA to the synthesis of either ATP or GTP and thus represents the only step of substrate-level phosphorylation in the TCA. The beta subunit provides nucleotide specificity of the enzyme and binds the substrate succinate, while the binding sites for coenzyme A and phosphate are found in the alpha subunit. This Mycobacterium ulcerans (strain Agy99) protein is Succinate--CoA ligase [ADP-forming] subunit beta.